Reading from the N-terminus, the 26-residue chain is MSDIEQRIKQAVAEQLGMRAEEIKNE.

A Carrier domain is found at 2 to 26 (SDIEQRIKQAVAEQLGMRAEEIKNE).

Belongs to the acyl carrier protein (ACP) family. In terms of processing, 4'-phosphopantetheine is transferred from CoA to a specific serine of apo-ACP by AcpS. This modification is essential for activity because fatty acids are bound in thioester linkage to the sulfhydryl of the prosthetic group.

It is found in the cytoplasm. It participates in lipid metabolism; fatty acid biosynthesis. Carrier of the growing fatty acid chain in fatty acid biosynthesis. In Acinetobacter calcoaceticus, this protein is Acyl carrier protein (acpP).